The following is an 87-amino-acid chain: Citrate lyase acyl carrier protein (87 aa).

The residue at position 14 (Ser14) is an O-(phosphoribosyl dephospho-coenzyme A)serine.

This sequence belongs to the CitD family. In terms of assembly, oligomer with a subunit composition of (alpha,beta,gamma)6.

The protein localises to the cytoplasm. Covalent carrier of the coenzyme of citrate lyase. The chain is Citrate lyase acyl carrier protein from Treponema denticola (strain ATCC 35405 / DSM 14222 / CIP 103919 / JCM 8153 / KCTC 15104).